We begin with the raw amino-acid sequence, 392 residues long: Putative RNA-binding protein Luc7-like 2 (392 aa).

A Phosphoserine modification is found at serine 18. Positions 102–177 (EVAKKRLAET…EAEEVYRNSM (76 aa)) form a coiled coil. Positions 235–257 (KQEKRNQERLKRREEREREEREK) are enriched in basic and acidic residues. The tract at residues 235–392 (KQEKRNQERL…SSEEREAGEI (158 aa)) is disordered. Residues 258–321 (LRRSRSHSKN…RSRSHQRSRH (64 aa)) show a composition bias toward basic residues. A 5-hydroxylysine; by JMJD6 mark is found at lysine 266 and lysine 269. 2 stretches are compositionally biased toward basic and acidic residues: residues 337-364 (KERFRDQDLASCDRDRSSRDRSPRDRDR) and 377-392 (RSEDRRSSEEREAGEI).

Belongs to the Luc7 family. As to quaternary structure, interacts with SCNM1.

The protein localises to the nucleus speckle. It is found in the nucleus. It localises to the nucleoplasm. May bind to RNA via its Arg/Ser-rich domain. The sequence is that of Putative RNA-binding protein Luc7-like 2 (LUC7L2) from Homo sapiens (Human).